Reading from the N-terminus, the 203-residue chain is LexA repressor (203 aa).

The H-T-H motif DNA-binding region spans 28 to 47 (IREIGDEFGITAKGAYDHLK). Residues S127 and K164 each act as for autocatalytic cleavage activity in the active site.

This sequence belongs to the peptidase S24 family. As to quaternary structure, homodimer.

It carries out the reaction Hydrolysis of Ala-|-Gly bond in repressor LexA.. Represses a number of genes involved in the response to DNA damage (SOS response), including recA and lexA. In the presence of single-stranded DNA, RecA interacts with LexA causing an autocatalytic cleavage which disrupts the DNA-binding part of LexA, leading to derepression of the SOS regulon and eventually DNA repair. The polypeptide is LexA repressor (Leptospira borgpetersenii serovar Hardjo-bovis (strain JB197)).